Consider the following 54-residue polypeptide: Zinc-containing ferredoxin A (54 aa).

The interval 1–21 is disordered; that stretch reads GIDPNYRTSRPEVGTHEGHKV. The interval 1–36 is N-terminal extension; the sequence is GIDPNYRTSRPEVGTHEGHKVYGPVENPKVLGIHGA. The span at 9-20 shows a compositional bias: basic and acidic residues; it reads SRPEVGTHEGHK. Zn(2+)-binding residues include His-16 and His-19. Lys-29 carries the post-translational modification N6-methyllysine. Position 34 (His-34) interacts with Zn(2+). Residues 35 to 54 enclose the 4Fe-4S ferredoxin-type 1 domain; the sequence is GAIVGVDFDLCIADGSCINA. Residues Cys-45 and Cys-51 each coordinate [3Fe-4S] cluster.

[3Fe-4S] cluster serves as cofactor. It depends on [4Fe-4S] cluster as a cofactor. The cofactor is Zn(2+).

Functionally, ferredoxins are iron-sulfur proteins that transfer electrons in a wide variety of metabolic reactions. This is Zinc-containing ferredoxin A (zfx) from Sulfuracidifex metallicus (Sulfolobus metallicus).